Consider the following 100-residue polypeptide: Urease subunit gamma (100 aa).

The protein belongs to the urease gamma subunit family. As to quaternary structure, heterotrimer of UreA (gamma), UreB (beta) and UreC (alpha) subunits. Three heterotrimers associate to form the active enzyme.

It localises to the cytoplasm. It carries out the reaction urea + 2 H2O + H(+) = hydrogencarbonate + 2 NH4(+). The protein operates within nitrogen metabolism; urea degradation; CO(2) and NH(3) from urea (urease route): step 1/1. This chain is Urease subunit gamma, found in Pseudomonas fluorescens (strain ATCC BAA-477 / NRRL B-23932 / Pf-5).